The chain runs to 123 residues: Large ribosomal subunit protein bL12 (123 aa).

This sequence belongs to the bacterial ribosomal protein bL12 family. In terms of assembly, homodimer. Part of the ribosomal stalk of the 50S ribosomal subunit. Forms a multimeric L10(L12)X complex, where L10 forms an elongated spine to which 2 to 4 L12 dimers bind in a sequential fashion. Binds GTP-bound translation factors.

Forms part of the ribosomal stalk which helps the ribosome interact with GTP-bound translation factors. Is thus essential for accurate translation. This Desulfotalea psychrophila (strain LSv54 / DSM 12343) protein is Large ribosomal subunit protein bL12.